The sequence spans 182 residues: Thioredoxin X, chloroplastic (182 aa).

Residues 1-67 (MDSIVSSSTI…TRKSSSSVIR (67 aa)) constitute a chloroplast transit peptide. The region spanning 68–177 (CGGIKEIGES…LKEYIDGLLN (110 aa)) is the Thioredoxin domain. Residues cysteine 99 and cysteine 102 each act as nucleophile in the active site. The cysteines at positions 99 and 102 are disulfide-linked.

This sequence belongs to the thioredoxin family. Predominantly expressed in leaves.

It localises to the plastid. The protein resides in the chloroplast stroma. Its function is as follows. Probable thiol-disulfide oxidoreductase that may participate in various redox reactions. This chain is Thioredoxin X, chloroplastic (ATHX), found in Arabidopsis thaliana (Mouse-ear cress).